The sequence spans 218 residues: Ras-related protein RabT2 (218 aa).

32 to 39 is a GTP binding site; the sequence is GDYKTGKG. Positions 54–61 match the Effector region motif; the sequence is VSSIGVDF. Residues 80-84 and 140-143 each bind GTP; these read DANSC and NKCD. Position 215 is a cysteine methyl ester (cysteine 215). The S-geranylgeranyl cysteine moiety is linked to residue cysteine 215. The propeptide at 216-218 is removed in mature form; it reads NIL.

Belongs to the small GTPase superfamily. Rab family.

It is found in the cell membrane. In Dictyostelium discoideum (Social amoeba), this protein is Ras-related protein RabT2 (rabT2).